Reading from the N-terminus, the 699-residue chain is Polyribonucleotide nucleotidyltransferase (699 aa).

Residues D485 and D491 each contribute to the Mg(2+) site. Residues 552-611 (PRITTIKINPEKIRDVIGKGGAVIRALTEETGTTIELEDDGTVKIASSNGEATKEAIRRI) form the KH domain. Residues 621-689 (GRIYNGKVIR…RQGRVRLSIK (69 aa)) form the S1 motif domain.

This sequence belongs to the polyribonucleotide nucleotidyltransferase family. Component of the RNA degradosome, which is a multiprotein complex involved in RNA processing and mRNA degradation. It depends on Mg(2+) as a cofactor.

The protein localises to the cytoplasm. It catalyses the reaction RNA(n+1) + phosphate = RNA(n) + a ribonucleoside 5'-diphosphate. In terms of biological role, involved in mRNA degradation. Catalyzes the phosphorolysis of single-stranded polyribonucleotides processively in the 3'- to 5'-direction. The chain is Polyribonucleotide nucleotidyltransferase from Shewanella oneidensis (strain ATCC 700550 / JCM 31522 / CIP 106686 / LMG 19005 / NCIMB 14063 / MR-1).